The primary structure comprises 544 residues: Dihydrolipoyllysine-residue acetyltransferase component of pyruvate dehydrogenase complex (544 aa).

2 Lipoyl-binding domains span residues methionine 1–aspartate 76 and isoleucine 113–glycine 188. N6-lipoyllysine is present on residues lysine 42 and lysine 154. A Peripheral subunit-binding (PSBD) domain is found at leucine 242–lysine 279. Histidine 516 is an active-site residue.

Belongs to the 2-oxoacid dehydrogenase family. Forms a 24-polypeptide structural core with octahedral symmetry. (R)-lipoate serves as cofactor.

The catalysed reaction is N(6)-[(R)-dihydrolipoyl]-L-lysyl-[protein] + acetyl-CoA = N(6)-[(R)-S(8)-acetyldihydrolipoyl]-L-lysyl-[protein] + CoA. Its function is as follows. The pyruvate dehydrogenase complex catalyzes the overall conversion of pyruvate to acetyl-CoA and CO(2). It contains multiple copies of three enzymatic components: pyruvate dehydrogenase (E1), dihydrolipoamide acetyltransferase (E2) and lipoamide dehydrogenase (E3). This chain is Dihydrolipoyllysine-residue acetyltransferase component of pyruvate dehydrogenase complex (pdhC), found in Acholeplasma laidlawii.